Here is a 562-residue protein sequence, read N- to C-terminus: Arginine--tRNA ligase (562 aa).

The 'HIGH' region signature appears at 129–139; sequence ANPTGPLHVGH.

Belongs to the class-I aminoacyl-tRNA synthetase family. As to quaternary structure, monomer.

It localises to the cytoplasm. It carries out the reaction tRNA(Arg) + L-arginine + ATP = L-arginyl-tRNA(Arg) + AMP + diphosphate. This is Arginine--tRNA ligase from Xanthomonas oryzae pv. oryzae (strain KACC10331 / KXO85).